The sequence spans 461 residues: MSLSVVILAAGKGTRMRSSLPKVLHSVAEKPMVGHVIDSARQLGASNIYVVYGFGGDVLKATLTKDNTGDDLTFVEQVEQLGTGHAVDQASPFLTDDEDVLVLYGDVPLTKVSTLESLLAAKPTDGMALLTVHLANPMGYGRIVRQEISGKQQVVGIIEQKDANEEQLKINEANTGILLANGGDLKRWLSNLSSDNAQGEYYLTDIIAAAHGEGKVVATAHPETEIEVEGANNRVQLATLERAYQARIAEELMIAGASLRDPARIDVRGNLTTGTEVSIDINCIFEGEVSLADNVQIGANCIIKNSTIGANVEIKPNSIIEDTIIEADCSVGPFARLRPGSVMKQDSHVGNFVEMKKTTLGVGSKAGHLSYLGNAEIGTKVNIGAGTITCNYDGVNKSTTEIGDNAFIGSNSSLVAPVIIGNSATVGAGSVISKEVEDNDLALTRAKQRNIAGWQRPVKKS.

Residues 1-234 (MSLSVVILAA…EIEVEGANNR (234 aa)) form a pyrophosphorylase region. Residues 8 to 11 (LAAG), K22, Q77, 82 to 83 (GT), 104 to 106 (YGD), G141, E159, N174, and N232 contribute to the UDP-N-acetyl-alpha-D-glucosamine site. D106 provides a ligand contact to Mg(2+). N232 is a binding site for Mg(2+). Residues 235–255 (VQLATLERAYQARIAEELMIA) are linker. Residues 256–461 (GASLRDPARI…AGWQRPVKKS (206 aa)) form an N-acetyltransferase region. UDP-N-acetyl-alpha-D-glucosamine-binding residues include R338 and K356. H368 functions as the Proton acceptor in the catalytic mechanism. Y371 and N382 together coordinate UDP-N-acetyl-alpha-D-glucosamine. Acetyl-CoA is bound by residues A385, 391 to 392 (NY), S410, A428, and R445.

This sequence in the N-terminal section; belongs to the N-acetylglucosamine-1-phosphate uridyltransferase family. It in the C-terminal section; belongs to the transferase hexapeptide repeat family. As to quaternary structure, homotrimer. Mg(2+) serves as cofactor.

The protein resides in the cytoplasm. It catalyses the reaction alpha-D-glucosamine 1-phosphate + acetyl-CoA = N-acetyl-alpha-D-glucosamine 1-phosphate + CoA + H(+). The catalysed reaction is N-acetyl-alpha-D-glucosamine 1-phosphate + UTP + H(+) = UDP-N-acetyl-alpha-D-glucosamine + diphosphate. The protein operates within nucleotide-sugar biosynthesis; UDP-N-acetyl-alpha-D-glucosamine biosynthesis; N-acetyl-alpha-D-glucosamine 1-phosphate from alpha-D-glucosamine 6-phosphate (route II): step 2/2. Its pathway is nucleotide-sugar biosynthesis; UDP-N-acetyl-alpha-D-glucosamine biosynthesis; UDP-N-acetyl-alpha-D-glucosamine from N-acetyl-alpha-D-glucosamine 1-phosphate: step 1/1. It participates in bacterial outer membrane biogenesis; LPS lipid A biosynthesis. Catalyzes the last two sequential reactions in the de novo biosynthetic pathway for UDP-N-acetylglucosamine (UDP-GlcNAc). The C-terminal domain catalyzes the transfer of acetyl group from acetyl coenzyme A to glucosamine-1-phosphate (GlcN-1-P) to produce N-acetylglucosamine-1-phosphate (GlcNAc-1-P), which is converted into UDP-GlcNAc by the transfer of uridine 5-monophosphate (from uridine 5-triphosphate), a reaction catalyzed by the N-terminal domain. This chain is Bifunctional protein GlmU, found in Colwellia psychrerythraea (strain 34H / ATCC BAA-681) (Vibrio psychroerythus).